A 1188-amino-acid chain; its full sequence is Meiotically up-regulated gene 190 protein (1188 aa).

Polar residues predominate over residues Met1–Gln11. Disordered regions lie at residues Met1 to Thr61 and Phe83 to Asn125. The segment covering Glu41–Thr61 has biased composition (basic and acidic residues). The segment covering Thr84–Lys112 has biased composition (polar residues). A helical transmembrane segment spans residues Leu173 to Ile193. Residues Ile228–Ser453 form the SMP-LTD domain. Residues Ala298–Gln318 are disordered. Residues Phe302–Gln318 are compositionally biased toward basic and acidic residues. C2 domains lie at Asp451–Asp576 and Lys636–Tyr781. Ca(2+) is bound by residues Asp485, Asp491, Asp544, Asp546, Ser549, and Asp552. Disordered regions lie at residues Thr615–Glu639 and Gln1002–Asn1066. Phosphoserine is present on Ser1005. Acidic residues predominate over residues Asp1022 to Thr1032.

Ca(2+) serves as cofactor.

It is found in the cytoplasm. It localises to the endoplasmic reticulum membrane. Its subcellular location is the nucleus membrane. The protein resides in the cytoskeleton. The protein localises to the microtubule organizing center. It is found in the spindle pole body. In terms of biological role, has a role in meiosis. This Schizosaccharomyces pombe (strain 972 / ATCC 24843) (Fission yeast) protein is Meiotically up-regulated gene 190 protein (mug190).